We begin with the raw amino-acid sequence, 145 residues long: Transcription antitermination protein NusB (145 aa).

The protein belongs to the NusB family.

In terms of biological role, involved in transcription antitermination. Required for transcription of ribosomal RNA (rRNA) genes. Binds specifically to the boxA antiterminator sequence of the ribosomal RNA (rrn) operons. This chain is Transcription antitermination protein NusB, found in Geotalea daltonii (strain DSM 22248 / JCM 15807 / FRC-32) (Geobacter daltonii).